The primary structure comprises 337 residues: Glyceraldehyde-3-phosphate dehydrogenase 1 (337 aa).

NAD(+)-binding positions include 12 to 13 (RI), aspartate 34, and methionine 79. D-glyceraldehyde 3-phosphate-binding positions include 151–153 (SCT), threonine 182, 211–212 (TG), and arginine 234. Cysteine 152 acts as the Nucleophile in catalysis. Residue asparagine 316 coordinates NAD(+).

The protein belongs to the glyceraldehyde-3-phosphate dehydrogenase family. In terms of assembly, homotetramer.

The protein localises to the cytoplasm. It carries out the reaction D-glyceraldehyde 3-phosphate + phosphate + NAD(+) = (2R)-3-phospho-glyceroyl phosphate + NADH + H(+). The protein operates within carbohydrate degradation; glycolysis; pyruvate from D-glyceraldehyde 3-phosphate: step 1/5. In Giardia intestinalis (Giardia lamblia), this protein is Glyceraldehyde-3-phosphate dehydrogenase 1 (GAP1).